Consider the following 473-residue polypeptide: Sulfate adenylyltransferase subunit 1 (473 aa).

The region spanning 19–238 (KTLLKFLTCG…IKIKNSISSE (220 aa)) is the tr-type G domain. Residues 28 to 35 (GSVDDGKS) form a G1 region. 28–35 (GSVDDGKS) contributes to the GTP binding site. Positions 86–90 (GITID) are G2. Residues 107-110 (DTPG) are G3. GTP contacts are provided by residues 107–111 (DTPGH) and 162–165 (NKMD). The tract at residues 162–165 (NKMD) is G4. The G5 stretch occupies residues 200-202 (SAL).

It belongs to the TRAFAC class translation factor GTPase superfamily. Classic translation factor GTPase family. CysN/NodQ subfamily. In terms of assembly, heterodimer composed of CysD, the smaller subunit, and CysN.

The catalysed reaction is sulfate + ATP + H(+) = adenosine 5'-phosphosulfate + diphosphate. It functions in the pathway sulfur metabolism; hydrogen sulfide biosynthesis; sulfite from sulfate: step 1/3. In terms of biological role, with CysD forms the ATP sulfurylase (ATPS) that catalyzes the adenylation of sulfate producing adenosine 5'-phosphosulfate (APS) and diphosphate, the first enzymatic step in sulfur assimilation pathway. APS synthesis involves the formation of a high-energy phosphoric-sulfuric acid anhydride bond driven by GTP hydrolysis by CysN coupled to ATP hydrolysis by CysD. The sequence is that of Sulfate adenylyltransferase subunit 1 from Buchnera aphidicola subsp. Acyrthosiphon pisum (strain APS) (Acyrthosiphon pisum symbiotic bacterium).